An 814-amino-acid chain; its full sequence is Testis-specific zinc finger protein topi (814 aa).

10 C2H2-type zinc fingers span residues 228-250 (NECT…MEKH), 275-297 (VKCN…GLIH), 360-382 (LQCE…SASH), 429-453 (FVCN…TSFH), 467-490 (LPCD…EEKH), 511-533 (YLCD…LRFH), 539-564 (FVCQ…RKCH), 570-592 (YLCL…RLIH), 598-620 (YECE…QRIH), and 626-649 (YSCL…RARH). The segment at 669-705 (TAAAQKAQSHNPEQQDNDVAGGASTSDVPSGSGFMST) is disordered. Polar residues predominate over residues 691–705 (ASTSDVPSGSGFMST).

Interacts with comr. Expressed in testis; primary spermatocytes.

The protein resides in the nucleus. In terms of biological role, required for male meiotic division and spermatid differentiation. Required for accumulation of aly and comr on chromatin. May function as a transcription factor. The sequence is that of Testis-specific zinc finger protein topi (topi) from Drosophila melanogaster (Fruit fly).